The sequence spans 170 residues: Protein-lysine myristoyltransferase HlyC (170 aa).

Active-site residues include histidine 23 and aspartate 92. Histidine 151 contributes to the heme binding site.

It belongs to the RTX toxin acyltransferase family. In terms of assembly, monomer. Post-translationally, proteolytically cleaved by the protease systems ClpAP, ClpXP and FtsH, leading to its degradation.

Its subcellular location is the cytoplasm. The enzyme catalyses tetradecanoyl-[ACP] + L-lysyl-[protein] = N(6)-tetradecanoyl-L-lysyl-[protein] + holo-[ACP] + H(+). With respect to regulation, the acyltransferase activity is inhibited by heme. Protein-lysine myristoyltransferase that catalyzes myristoylation of the protoxin (HlyA) at two internal lysine residues, thereby converting it to the active toxin. The polypeptide is Protein-lysine myristoyltransferase HlyC (Escherichia coli).